A 982-amino-acid chain; its full sequence is Glutamate [NMDA] receptor subunit 1 (982 aa).

The N-terminal stretch at 1-16 (MAFAVWFLSTFVIVAA) is a signal peptide. At 17-561 (QRHMALEHEG…TLVSFLQPFS (545 aa)) the chain is on the extracellular side. Residues Asn-247, Asn-303, Asn-334, Asn-386, Asn-443, Asn-470, and Asn-490 are each glycosylated (N-linked (GlcNAc...) asparagine). Residues 518-520 (PLT) and Arg-525 each bind glycine. The chain crosses the membrane as a helical span at residues 562 to 582 (NTLWILVMVSVHVVALVLYLL). Residues 583–639 (DRFSPFGRFKLSHSDSNEEKALNLSSAVWFAWGVLLNSGIGEGTPRSFSARVLGMVW) are Cytoplasmic-facing. Residues 640–660 (AGFAMIIVASYTANLAAFLVL) form a helical membrane-spanning segment. Residues 661-819 (ERPKTKLSGI…KTPNTLGLKN (159 aa)) are Extracellular-facing. The N-linked (GlcNAc...) asparagine glycan is linked to Asn-681. Glycine is bound by residues Ser-691 and Asp-735. Residues 820-840 (MAGVFILVGVGIAGGVGLIII) form a helical membrane-spanning segment. Topologically, residues 841–982 (EVIYKKHQVK…YTSDVSHLVV (142 aa)) are cytoplasmic. A disordered region spans residues 934-982 (EIGKPGQSPKVIGGPPHPMLGKTRPQAQQNLLPPRYSPGYTSDVSHLVV). A compositionally biased stretch (polar residues) spans 972–982 (GYTSDVSHLVV).

Belongs to the glutamate-gated ion channel (TC 1.A.10.1) family. In terms of assembly, forms a heteromeric NMDA channel with Nmdar2.

The protein localises to the cell membrane. It is found in the postsynaptic cell membrane. The protein resides in the postsynaptic density. NMDA receptor subtype of glutamate-gated ion channels with high calcium permeability and voltage-dependent sensitivity to magnesium. Mediated by glycine. This protein plays a key role in synaptic plasticity, synaptogenesis, excitotoxicity, memory acquisition and learning. It mediates neuronal functions in glutamate neurotransmission. Is involved in the cell surface targeting of NMDA receptors. Plays a role in associative learning and in long-term memory consolidation. The protein is Glutamate [NMDA] receptor subunit 1 of Drosophila willistoni (Fruit fly).